The primary structure comprises 287 residues: Glycine--tRNA ligase alpha subunit (287 aa).

The protein belongs to the class-II aminoacyl-tRNA synthetase family. Tetramer of two alpha and two beta subunits.

It localises to the cytoplasm. It catalyses the reaction tRNA(Gly) + glycine + ATP = glycyl-tRNA(Gly) + AMP + diphosphate. This chain is Glycine--tRNA ligase alpha subunit, found in Campylobacter jejuni subsp. jejuni serotype O:23/36 (strain 81-176).